The primary structure comprises 130 residues: Putative antitoxin VapB50 (130 aa).

Functionally, possibly the antitoxin component of a type II toxin-antitoxin (TA) system. Its cognate toxin is VapC50. The protein is Putative antitoxin VapB50 of Mycobacterium tuberculosis (strain ATCC 25618 / H37Rv).